Reading from the N-terminus, the 343-residue chain is S-adenosylmethionine:tRNA ribosyltransferase-isomerase (343 aa).

Belongs to the QueA family. As to quaternary structure, monomer.

The protein localises to the cytoplasm. It carries out the reaction 7-aminomethyl-7-carbaguanosine(34) in tRNA + S-adenosyl-L-methionine = epoxyqueuosine(34) in tRNA + adenine + L-methionine + 2 H(+). Its pathway is tRNA modification; tRNA-queuosine biosynthesis. Its function is as follows. Transfers and isomerizes the ribose moiety from AdoMet to the 7-aminomethyl group of 7-deazaguanine (preQ1-tRNA) to give epoxyqueuosine (oQ-tRNA). In Geotalea uraniireducens (strain Rf4) (Geobacter uraniireducens), this protein is S-adenosylmethionine:tRNA ribosyltransferase-isomerase.